Consider the following 123-residue polypeptide: Gamma-synuclein (123 aa).

2 repeat units span residues 20–30 and 31–41. The interval 20-67 is 4 X 11 AA tandem repeats of [EGSA]-K-T-K-[EQ]-[GQ]-V-X(4); that stretch reads EKTKQGVTEAAEKTKEGVMYVGTKTKENVVQSVTSVAEKTKEQANAVS. The stretch at 42–56 is one 3; approximate repeat; that stretch reads TKTKENVVQSVTSVA. Repeat 4 spans residues 57–67; the sequence is EKTKEQANAVS. Residues Ser-67 and Ser-72 each carry the phosphoserine modification. The tract at residues 91–123 is disordered; that stretch reads TTGVVRKEDLEPPAQDQEAKEQEENEEAKSGED. Basic and acidic residues predominate over residues 107–123; the sequence is QEAKEQEENEEAKSGED. Ser-120 carries the phosphoserine; by BARK1, CaMK2 and CK2 modification.

This sequence belongs to the synuclein family. In terms of assembly, may be a centrosome-associated protein. Interacts with MYOC; affects its secretion and its aggregation. In terms of processing, phosphorylated. Phosphorylation by GRK5 appears to occur on residues distinct from the residue phosphorylated by other kinases. As to expression, highly expressed in brain, particularly in the substantia nigra. Also expressed in the corpus callosum, heart, skeletal muscle, ovary, testis, colon and spleen. Weak expression in pancreas, kidney and lung. Expressed predominantly in the cell bodies and axons of primary sensory neurons, sympathetic neurons and motoneurons.

It localises to the cytoplasm. It is found in the perinuclear region. The protein localises to the cytoskeleton. The protein resides in the microtubule organizing center. Its subcellular location is the centrosome. It localises to the spindle. Its function is as follows. Plays a role in neurofilament network integrity. May be involved in modulating axonal architecture during development and in the adult. In vitro, increases the susceptibility of neurofilament-H to calcium-dependent proteases. May also function in modulating the keratin network in skin. Activates the MAPK and Elk-1 signal transduction pathway. This is Gamma-synuclein (Sncg) from Mus musculus (Mouse).